Consider the following 397-residue polypeptide: Elongation factor Tu-1 (397 aa).

The region spanning 10-206 (KPHVNIGTIG…AVDEAIPEPE (197 aa)) is the tr-type G domain. Residues 19-26 (GHIDHGKT) are G1. 19-26 (GHIDHGKT) lines the GTP pocket. Thr26 is a binding site for Mg(2+). The interval 62 to 66 (GITIS) is G2. Residues 83–86 (DCPG) form a G3 region. GTP-binding positions include 83-87 (DCPGH) and 138-141 (NKAD). The interval 138–141 (NKAD) is G4. The segment at 176–178 (SAL) is G5.

It belongs to the TRAFAC class translation factor GTPase superfamily. Classic translation factor GTPase family. EF-Tu/EF-1A subfamily. As to quaternary structure, monomer.

The protein localises to the cytoplasm. The enzyme catalyses GTP + H2O = GDP + phosphate + H(+). Functionally, GTP hydrolase that promotes the GTP-dependent binding of aminoacyl-tRNA to the A-site of ribosomes during protein biosynthesis. The sequence is that of Elongation factor Tu-1 from Streptomyces coelicolor (strain ATCC BAA-471 / A3(2) / M145).